The primary structure comprises 208 residues: Probable nicotinate-nucleotide adenylyltransferase (208 aa).

The protein belongs to the NadD family.

The enzyme catalyses nicotinate beta-D-ribonucleotide + ATP + H(+) = deamido-NAD(+) + diphosphate. Its pathway is cofactor biosynthesis; NAD(+) biosynthesis; deamido-NAD(+) from nicotinate D-ribonucleotide: step 1/1. Its function is as follows. Catalyzes the reversible adenylation of nicotinate mononucleotide (NaMN) to nicotinic acid adenine dinucleotide (NaAD). The sequence is that of Probable nicotinate-nucleotide adenylyltransferase from Kineococcus radiotolerans (strain ATCC BAA-149 / DSM 14245 / SRS30216).